Reading from the N-terminus, the 267-residue chain is MAIVPEPAKEVMANYGDNNNDLLFEADGPKEMKCCTQNLDLGSLRNGSIQLQISHQLWNKSIRQMVSVIVAVEKPMKNPSSQAFCDDDQKSIFSFIFEEEPIILETCNDDFVCDANVQSMECKLQDKDHKSLVLAGPHMLKALHLLTGDLKREVVFCMSFVQGDDSNNKIPVTLGIKGKNLYLSCVMKDNTPTLQLEDIDPKRYPKRDMEKRFVFYKTEIKNRVEFESALYPNWYISTSQAEQKPVFLGNSKGRQDITDFTMEVLSP.

A propeptide spanning residues 1-114 is cleaved from the precursor; sequence MAIVPEPAKE…ETCNDDFVCD (114 aa).

Belongs to the IL-1 family. In terms of assembly, (Microbial infection) Interacts with African swine fever virus (ASFV) protein L83L. Monomer. In its precursor form, weakly interacts with full-length MEFV; the mature cytokine does not interact at all. Interacts with integrins ITGAV:ITGBV and ITGA5:ITGB1; integrin-binding is required for IL1B signaling. Interacts with cargo receptor TMED10; the interaction is direct and is required for the secretion of IL1B mature form. Interacts with HSP90AB1; the interaction facilitates cargo translocation into the ERGIC. Interacts with HSP90B1; the interaction facilitates cargo translocation into the ERGIC.

It is found in the cytoplasm. The protein localises to the cytosol. The protein resides in the secreted. It localises to the lysosome. Its subcellular location is the extracellular exosome. In terms of biological role, potent pro-inflammatory cytokine. Initially discovered as the major endogenous pyrogen, induces prostaglandin synthesis, neutrophil influx and activation, T-cell activation and cytokine production, B-cell activation and antibody production, and fibroblast proliferation and collagen production. Promotes Th17 differentiation of T-cells. Synergizes with IL12/interleukin-12 to induce IFNG synthesis from T-helper 1 (Th1) cells. Plays a role in angiogenesis by inducing VEGF production synergistically with TNF and IL6. Involved in transduction of inflammation downstream of pyroptosis: its mature form is specifically released in the extracellular milieu by passing through the gasdermin-D (GSDMD) pore. This chain is Interleukin-1 beta (IL1B), found in Sus scrofa (Pig).